We begin with the raw amino-acid sequence, 598 residues long: Arginine--tRNA ligase (598 aa).

Residues 135–145 carry the 'HIGH' region motif; that stretch reads ANPTGPIHIGG. Positions 229 to 248 are disordered; it reads VDGGTDEKGEPLGEGDSEQR. A compositionally biased stretch (basic and acidic residues) spans 231-248; the sequence is GGTDEKGEPLGEGDSEQR.

It belongs to the class-I aminoacyl-tRNA synthetase family. In terms of assembly, monomer.

The protein localises to the cytoplasm. It catalyses the reaction tRNA(Arg) + L-arginine + ATP = L-arginyl-tRNA(Arg) + AMP + diphosphate. The polypeptide is Arginine--tRNA ligase (Bifidobacterium animalis subsp. lactis (strain AD011)).